The following is a 1005-amino-acid chain: Pikachurin (1005 aa).

The first 24 residues, 1–24 (MDLISTFLLHFLLLACSLPPGAVS), serve as a signal peptide directing secretion. Fibronectin type-III domains lie at 37-136 (PPLD…TLSQ) and 144-239 (APHQ…TLGP). N47 carries N-linked (GlcNAc...) asparagine glycosylation. Residues 281–328 (PATKVGNKKSKKTSVSNSEMDSRLAQPTSASLPETTVAVPPTPAQRKG) are disordered. The segment covering 305-314 (AQPTSASLPE) has biased composition (polar residues). Residues 339–377 (FDMSCDETLCSADSFCVNDYAWGGSRCHCNLGKGGEACS) form the EGF-like 1 domain. 11 disulfide bridges follow: C343–C354, C348–C365, C367–C376, C530–C560, C565–C576, C570–C586, C588–C597, C784–C795, C789–C804, C806–C815, and C975–C1002. Positions 382-560 (IQYPQFFGHS…ALNGADVGEC (179 aa)) constitute a Laminin G-like 1 domain. EGF-like domains follow at residues 561 to 598 (SSGI…RHCE) and 780 to 816 (AAHP…LNCQ). The region spanning 605 to 784 (IPQFRESLRS…VNVENAAHPC (180 aa)) is the Laminin G-like 2 domain. One can recognise a Laminin G-like 3 domain in the interval 823–1002 (IEIPQFIGRS…AVDGKNINTC (180 aa)).

Interacts with DAG1 alpha-dystroglycan. Interacts with GPR158 and GPR179; transsynaptic interaction is required for synaptic organization of photoreceptor cells. In terms of processing, O-glycosylated; contains chondroitin sulfate and heparan sulfate.

It localises to the secreted. The protein resides in the extracellular space. Its subcellular location is the extracellular matrix. The protein localises to the synaptic cleft. It is found in the presynaptic active zone. Involved in both the retinal photoreceptor ribbon synapse formation and physiological functions of visual perception. Plays a key role in the synaptic organization of photoreceptors by mediating transsynaptic interaction between alpha-dystroglycan and GPR179 on the postsynaptic membrane. Necessary for proper bipolar dendritic tip apposition to the photoreceptor ribbon synapse. Promotes matrix assembly and cell adhesiveness. The polypeptide is Pikachurin (Egflam) (Rattus norvegicus (Rat)).